Here is a 145-residue protein sequence, read N- to C-terminus: Putative type I specificity subunit S.MpnORF289P C-terminus (145 aa).

It belongs to the type-I restriction system S methylase family. In terms of assembly, the methyltransferase is composed of M and S polypeptides.

Its function is as follows. The C-terminal section of a specificity (S) subunit of a type I methyltransferase (MTase); this subunit dictates DNA sequence specificity. The single R subunit has multiple frameshifts and is probably not expressed. This Mycoplasma pneumoniae (strain ATCC 29342 / M129 / Subtype 1) (Mycoplasmoides pneumoniae) protein is Putative type I specificity subunit S.MpnORF289P C-terminus.